The chain runs to 120 residues: MFLVSKYNYFWIFLLIASLIPTIAFSISRVIAPISKGPEKFTSYECGIEPMGDAWIQFQIRYYMFALVFVIFDVETVFLYPWAMSFKQLGIPAFIEVFIFVFILIIGLIYAWRKGALEWS.

The next 3 helical transmembrane spans lie at 7-27 (YNYF…AFSI), 64-84 (MFAL…PWAM), and 89-109 (LGIP…IGLI).

The protein belongs to the complex I subunit 3 family. In terms of assembly, NDH is composed of at least 16 different subunits, 5 of which are encoded in the nucleus.

The protein localises to the plastid. It is found in the chloroplast thylakoid membrane. It catalyses the reaction a plastoquinone + NADH + (n+1) H(+)(in) = a plastoquinol + NAD(+) + n H(+)(out). The catalysed reaction is a plastoquinone + NADPH + (n+1) H(+)(in) = a plastoquinol + NADP(+) + n H(+)(out). Its function is as follows. NDH shuttles electrons from NAD(P)H:plastoquinone, via FMN and iron-sulfur (Fe-S) centers, to quinones in the photosynthetic chain and possibly in a chloroplast respiratory chain. The immediate electron acceptor for the enzyme in this species is believed to be plastoquinone. Couples the redox reaction to proton translocation, and thus conserves the redox energy in a proton gradient. The polypeptide is NAD(P)H-quinone oxidoreductase subunit 3, chloroplastic (Anthoceros angustus (Hornwort)).